Here is a 1072-residue protein sequence, read N- to C-terminus: Rho family-interacting cell polarization regulator 2 (1072 aa).

Residues 83–112 (NGLDEYLEVHQTELDKLTAQLKDMRRNSRL) are a coiled coil. The tract at residues 173–470 (RESLTEINRS…ATTATQHRAR (298 aa)) is necessary for interaction with NCAM and myoblast protrusion formation. Disordered stretches follow at residues 439-465 (DRVPPANSAEPSSAHVTSSPDIATTAT) and 683-718 (EVEKNSYRTEHPEARGHLQRSLTEDTGVGTSVAGSP). Polar residues predominate over residues 447–460 (AEPSSAHVTSSPDI). The span at 683–698 (EVEKNSYRTEHPEARG) shows a compositional bias: basic and acidic residues.

This sequence belongs to the RIPOR family. Homooligomer; homooligomerization is regulated by RHOC and leads to the formation of concatemers through the association of N- and C-termini. Interacts with NCAM; this interaction is necessary for myoblast protrusion formation. In terms of tissue distribution, expressed in myoblast and myotubes (at protein level). Expressed in brain, eyes and skeletal muscle.

The protein resides in the cytoplasm. It is found in the cytoskeleton. The protein localises to the cell projection. It localises to the filopodium. Its subcellular location is the apical cell membrane. The protein resides in the stereocilium. It is found in the stereocilium membrane. In terms of biological role, acts as an inhibitor of the small GTPase RHOA and plays several roles in the regulation of myoblast and hair cell differentiation, lymphocyte T proliferation and neutrophil polarization. Plays a role in fetal mononuclear myoblast differentiation by promoting filopodia and myotube formation. Maintains naive T lymphocytes in a quiescent state and prevents chemokine-induced T lymphocyte responses, such as cell adhesion, polarization and migration. Involved also in the regulation of neutrophil polarization, chemotaxis and adhesion. Required for normal development of inner and outer hair cell stereocilia within the cochlea of the inner ear. Plays a role for maintaining the structural organization of the basal domain of stereocilia. Involved in mechanosensory hair cell function. Required for normal hearing. This is Rho family-interacting cell polarization regulator 2 from Coturnix japonica (Japanese quail).